The sequence spans 148 residues: Arginine repressor (148 aa).

Belongs to the ArgR family.

It is found in the cytoplasm. Its pathway is amino-acid biosynthesis; L-arginine biosynthesis [regulation]. In terms of biological role, regulates arginine biosynthesis genes. The sequence is that of Arginine repressor from Chlorobium luteolum (strain DSM 273 / BCRC 81028 / 2530) (Pelodictyon luteolum).